A 69-amino-acid polypeptide reads, in one-letter code: Small, acid-soluble spore protein C4 (69 aa).

This sequence belongs to the alpha/beta-type SASP family.

Functionally, SASP are bound to spore DNA. They are double-stranded DNA-binding proteins that cause DNA to change to an a-like conformation. They protect the DNA backbone from chemical and enzymatic cleavage and are thus involved in dormant spore's high resistance to UV light. This is Small, acid-soluble spore protein C4 (SASP-C4) from Priestia megaterium (Bacillus megaterium).